The sequence spans 306 residues: B- and T-lymphocyte attenuator (306 aa).

The signal sequence occupies residues 1 to 29; it reads MKTVPAMLGTPRLFREFFILHLGLWSILC. Topologically, residues 30–183 are extracellular; that stretch reads EKATKRNDEE…ERPGRTWLLY (154 aa). The Ig-like V-type domain maps to 37 to 139; that stretch reads DEECPVQLTI…SQVINSHSVT (103 aa). 3 disulfide bridges follow: cysteine 40-cysteine 69, cysteine 64-cysteine 124, and cysteine 78-cysteine 85. N-linked (GlcNAc...) asparagine glycosylation is found at asparagine 74, asparagine 81, asparagine 101, asparagine 119, asparagine 148, and asparagine 165. A helical transmembrane segment spans residues 184-204; the sequence is TLLPLGALLLLLACVCLLCFL. Residues 205–306 lie on the Cytoplasmic side of the membrane; that stretch reads KRIQGKEKKP…TEYASICVRS (102 aa).

In terms of assembly, interacts with tyrosine phosphatases PTPN6/SHP-1 and PTPN11/SHP-2. Interacts with TNFRSF14/HVEM (via cysteine-rich domain 1). In terms of processing, phosphorylated on Tyr residues by TNFRSF14 and by antigen receptors cross-linking, both inducing association with PTPN6 and PTPN11. Post-translationally, N-glycosylated. As to expression, expressed in splenic T- and B-cells as well as lymph node tissues but very weakly in somatic tissues. Also expressed in macrophages, NK cells and dendritic cells. A polymorphic tissue distribution between several strains is seen.

The protein localises to the cell membrane. Its function is as follows. Inhibitory receptor on lymphocytes that negatively regulates antigen receptor signaling via PTPN6/SHP-1 and PTPN11/SHP-2. May interact in cis (on the same cell) or in trans (on other cells) with TNFRSF14. In cis interactions, appears to play an immune regulatory role inhibiting in trans interactions in naive T cells to maintain a resting state. In trans interactions, can predominate during adaptive immune response to provide survival signals to effector T cells. This is B- and T-lymphocyte attenuator from Mus musculus (Mouse).